Reading from the N-terminus, the 457-residue chain is Phosphomethylpyrimidine synthase (457 aa).

Substrate-binding positions include Asn-81, Met-110, Tyr-139, His-175, Ser-195–Gly-197, Asp-236–Arg-239, and Glu-275. His-279 is a Zn(2+) binding site. Residue Tyr-302 participates in substrate binding. His-343 contributes to the Zn(2+) binding site. [4Fe-4S] cluster is bound by residues Cys-423, Cys-426, and Cys-431.

The protein belongs to the ThiC family. The cofactor is [4Fe-4S] cluster.

It carries out the reaction 5-amino-1-(5-phospho-beta-D-ribosyl)imidazole + S-adenosyl-L-methionine = 4-amino-2-methyl-5-(phosphooxymethyl)pyrimidine + CO + 5'-deoxyadenosine + formate + L-methionine + 3 H(+). It participates in cofactor biosynthesis; thiamine diphosphate biosynthesis. Its function is as follows. Catalyzes the synthesis of the hydroxymethylpyrimidine phosphate (HMP-P) moiety of thiamine from aminoimidazole ribotide (AIR) in a radical S-adenosyl-L-methionine (SAM)-dependent reaction. The polypeptide is Phosphomethylpyrimidine synthase (Aquifex aeolicus (strain VF5)).